Consider the following 150-residue polypeptide: Monooxygenase nsrS (150 aa).

The protein belongs to the avfA family.

It participates in secondary metabolite biosynthesis. Monooxygenase; part of the gene cluster that mediates the biosynthesis of the tetrahydroxanthone dimer neosartorin, which exhibits antibacterial activity. The two different monomeric units appear to be synthesized by the same set of enzymes, among which the Baeyer-Villiger monooxygenase nsrF is the key enzyme for the divergence of the biosynthetic routes. The pathway begins with the synthesis of atrochrysone thioester by the polyketide synthase nsrB. The atrochrysone carboxyl ACP thioesterase nsrC then breaks the thioester bond and releases the atrochrysone carboxylic acid from AacuL. Atrochrysone carboxylic acid is decarboxylated by the decarboxylase nsrE, and oxidized by the anthrone oxygenase nsrD to yield emodin. Emodin is then reduced to emodin hydroquinone by the oxidoreductase nsrR. A-ring reduction by the short chain dehydrogenase nsrJ, dehydration by the scytalone dehydratase-like protein nsrI and probable spontaneous re-oxidation, results in overall deoxygenation to chrysophanol. The Baeyer-Villiger monooxygenase nsrF accepts chrysophanol as a substrate to insert one oxygen atom at two different positions to yield the precursors of both monomric units. NsrF is promiscuous/flexible in interacting with the 2 (non methylated and methylated) aromatic rings of chrysophanol, thus diverging the biosynthetic pathway at this point. After the hydrolysis of the lactones, methylesterification by the methyltransferase nsrG yields respectively moniliphenone and 2,2',6'-trihydroxy-4-methyl-6-methoxya-cyldiphenylmethanone. The next steps are the hydroxylation by the FAD-dependent monooxygenase nsrK, followed by isomerization by the monooxygenase nsrQ. The short chain dehydrogenase/reductase nsrO then catalyzes the C-5 ketoreduction to give the xanthone skeleton of blennolide C and 5-acetylblennolide A. The acetyltransferase nsrL has a strict substrate specificity and uses only blennolide A but not blennolide C to yield 5-acetylblennolide A as the single-acetylated product. In the final step of the biosynthesis, the heterodimerization of the 2 xanthones, blennolide C and 5-acetylblennolide A, is catalyzed by the cytochrome P450 monooxygenase nsrP. NsrP can utilize at least three different xanthones as its substrates to perform the dimerization reaction. This Aspergillus novofumigatus (strain IBT 16806) protein is Monooxygenase nsrS.